The chain runs to 513 residues: MPHLLEMKNITKAFGAVKAVDNVSLTLEAGQVLSLCGENGSGKSTLMKVLCAIYPHGSYDGQIIFSGDELRANHIRDTEQKGIAIIHQELALVKEMTVLENMFLGNEWTRFGVMDYDNMYLRCQRMLEQVKLAVDPNTKVGELGLGQQQLVEIAKALNKQVRLLVLDEPTASLTERETGILLEIIQDLRDHGIACIYISHKLNEVKAISDVICVIRDGKHIGTRPAAELSEDHIIAMMVGRELTELYPNEPHVIGEEVLRVEHLTAWHPVNRHIRRVDDVSFALHRGEILGIAGLVGSGRTETVQCLFGAYRGRWQGDIFIDGKPVTISNCQQAMAQGIAMVPEDRKKDGIVPVMGVAQNMTLAALDQFTGPLSMLDDAREQDIIRQSLANLKVKTSSPELAIARLSGGNQQKAVLAKCLLLNPRILILDEPTRGIDIGAKYEIYKLINALVKQHIAVIVISSELPEVLGLSDRVLVMHQGRIKADLINRDLTQEQVMEAALRSEHRAENIAV.

ABC transporter domains lie at 5–242 and 259–505; these read LEMK…VGRE and LRVE…LRSE. 37 to 44 is a binding site for ATP; it reads GENGSGKS.

It belongs to the ABC transporter superfamily. Xylose importer (TC 3.A.1.2.4) family. The complex is composed of two ATP-binding proteins (XylG), two transmembrane proteins (XylH) and a solute-binding protein (XylF).

Its subcellular location is the cell inner membrane. It catalyses the reaction D-xylose(out) + ATP + H2O = D-xylose(in) + ADP + phosphate + H(+). In terms of biological role, part of the ABC transporter complex XylFGH involved in xylose import. Responsible for energy coupling to the transport system. The protein is Xylose import ATP-binding protein XylG of Pectobacterium atrosepticum (strain SCRI 1043 / ATCC BAA-672) (Erwinia carotovora subsp. atroseptica).